Reading from the N-terminus, the 1114-residue chain is Constitutive coactivator of PPAR-gamma-like protein 1 (1114 aa).

The interval 339–402 (PPHYLARPNP…YNLAEPALTL (64 aa)) is interaction with YES1, SRC and FYN. 2 disordered regions span residues 372-396 (QAKPVAPQVPSPGAPGQGPHPYNLA) and 411-519 (EQNY…GNQI). The span at 431–443 (SPINPAPSGSPNH) shows a compositional bias: polar residues. Positions 477 to 498 (GWEKTGSHSEPQARGDPGDQTK) are enriched in basic and acidic residues. Residues 499–510 (AEGSSTASSGSQ) are compositionally biased toward polar residues. T651 is modified (phosphothreonine). The RNA binding stretch occupies residues 825–1114 (AEQAAKVEKM…LEAAVLKKEE (290 aa)). Omega-N-methylarginine occurs at positions 869, 880, and 882. A disordered region spans residues 918–940 (FSGSDSSRTSKSQGGIQPIPSQG). K928 carries the post-translational modification N6-acetyllysine. The span at 929 to 940 (SQGGIQPIPSQG) shows a compositional bias: low complexity. Residue S956 is modified to Phosphoserine. An omega-N-methylarginine mark is found at R978 and R982. A disordered region spans residues 1009–1099 (AIQGKPPYAA…LNALSTDSGC (91 aa)). S1019 carries the phosphoserine modification. The span at 1022–1033 (EVAKELKSRSGE) shows a compositional bias: basic and acidic residues. Over residues 1034 to 1043 (SKSSAMSSDG) the composition is skewed to polar residues. A phosphoserine mark is found at S1040, S1041, and S1044. Residues 1060–1097 (MNGSAGDTRAPSHSESALNNDSKTCNTNPHLNALSTDS) are compositionally biased toward polar residues.

This sequence belongs to the constitutive coactivator of PPAR-gamma family. Interacts with PURA. Interacts with YES1, SRC, FYN. Upon tyrosine phosphorylation, interacts with PIK3R1. Post-translationally, arg-978 is dimethylated, probably to asymmetric dimethylarginine. In terms of processing, phosphorylated on tyrosine by src family kinases upon ultraviolet exposure.

It is found in the cytoplasm. The protein resides in the cell membrane. Its function is as follows. Component of the oxidative stress-induced survival signaling. May regulate the activation of SRC family protein kinases. May act as a scaffolding protein enabling SRC family protein kinases to phosphorylate and activate PI3-kinase. Binds IGF2 RNA and promotes the production of IGF2 protein. This is Constitutive coactivator of PPAR-gamma-like protein 1 (FAM120A) from Bos taurus (Bovine).